The chain runs to 285 residues: Homeobox protein Hox-A4 (285 aa).

2 disordered regions span residues 19–70 (PFEE…APRA) and 94–130 (ASPG…TTPA). The span at 27-41 (GGPGGGDGAVGGGPG) shows a compositional bias: gly residues. The span at 44–70 (RPQSAPHLPAPNPHAARQPPAYYAPRA) shows a compositional bias: low complexity. The segment covering 106–118 (GAHPSPAPQPPVP) has biased composition (pro residues). Positions 159 to 164 (VYPWMK) match the Antp-type hexapeptide motif. A DNA-binding region (homeobox) is located at residues 180–239 (PKRSRTAYTRQQVLELEKEFHFNRYLTRRRRIEIAHTLCLSERQVKIWFQNRRMKWKKDH). The interval 238–285 (DHKLPNTKMRSSNTASAPAGPPGKAQTHSPHHHPHPLPGASTPIPSSI) is disordered.

The protein belongs to the Antp homeobox family. Deformed subfamily.

Its subcellular location is the nucleus. Sequence-specific transcription factor which is part of a developmental regulatory system that provides cells with specific positional identities on the anterior-posterior axis. Binds to sites in the 5'-flanking sequence of its coding region with various affinities. The consensus sequences of the high and low affinity binding sites are 5'-TAATGA[CG]-3' and 5'-CTAATTTT-3'. The chain is Homeobox protein Hox-A4 (Hoxa4) from Mus musculus (Mouse).